Here is an 844-residue protein sequence, read N- to C-terminus: Probable inorganic carbon transporter subunit DabA 1 (844 aa).

Positions 359, 361, 543, and 558 each coordinate Zn(2+).

Belongs to the inorganic carbon transporter (TC 9.A.2) DabA family. As to quaternary structure, forms a complex with DabB. The cofactor is Zn(2+).

The protein resides in the cell inner membrane. Functionally, part of an energy-coupled inorganic carbon pump. This Bradyrhizobium sp. (strain BTAi1 / ATCC BAA-1182) protein is Probable inorganic carbon transporter subunit DabA 1.